A 133-amino-acid polypeptide reads, in one-letter code: Small ribosomal subunit protein uS8 (133 aa).

This sequence belongs to the universal ribosomal protein uS8 family. Part of the 30S ribosomal subunit.

One of the primary rRNA binding proteins, it binds directly to 16S rRNA central domain where it helps coordinate assembly of the platform of the 30S subunit. This is Small ribosomal subunit protein uS8 from Aeropyrum pernix (strain ATCC 700893 / DSM 11879 / JCM 9820 / NBRC 100138 / K1).